We begin with the raw amino-acid sequence, 315 residues long: Taste receptor type 2 member 3 (315 aa).

At 1–5 (MGLTE) the chain is on the extracellular side. Residues 6-26 (GLFLILSGTQFALGILVNCFI) form a helical membrane-spanning segment. Residues 27–41 (GLVNGSSWFKTKRMS) lie on the Cytoplasmic side of the membrane. Residues 42–62 (LSDFIITTLAFLRIILLCIIL) form a helical membrane-spanning segment. The Extracellular portion of the chain corresponds to 63 to 93 (TDSFLIEFSPNAHDSGVIMQIIDVSWTFTNH). A helical transmembrane segment spans residues 94 to 114 (LSIWLATCLGVLYCLKIASFS). Residues 115–127 (HPTFLWLKWRVSR) lie on the Cytoplasmic side of the membrane. The chain crosses the membrane as a helical span at residues 128–148 (VMVWMLLGVLLLSCGSTASLI). The Extracellular portion of the chain corresponds to 149–185 (NEFKLYSVFRGIEATXNVTEHFRKKRSEYYLIHVLGT). Residue Asn-165 is glycosylated (N-linked (GlcNAc...) asparagine). The helical transmembrane segment at 186–206 (LWYLPPLIVSLAAYFLLIFSL) threads the bilayer. The Cytoplasmic portion of the chain corresponds to 207–233 (GRHTRQMLQNGTSSRDPSTEAHKRAIR). Residues 234 to 254 (IILSSFFLFLLYFLAFLIASF) traverse the membrane as a helical segment. Topologically, residues 255–265 (GNFLPKTKMAK) are extracellular. The chain crosses the membrane as a helical span at residues 266-286 (MIGEVMTMFYPAGHSFILILG). Residues 287-315 (NSKLKQTFVEMLRCESGHLKPGSKGPIFS) lie on the Cytoplasmic side of the membrane.

It belongs to the G-protein coupled receptor T2R family.

Its subcellular location is the membrane. Functionally, gustducin-coupled receptor implicated in the perception of bitter compounds in the oral cavity and the gastrointestinal tract. Signals through PLCB2 and the calcium-regulated cation channel TRPM5. The polypeptide is Taste receptor type 2 member 3 (TAS2R3) (Pongo pygmaeus (Bornean orangutan)).